The sequence spans 92 residues: UPF0250 protein Avin_08440 (92 aa).

The protein belongs to the UPF0250 family.

The polypeptide is UPF0250 protein Avin_08440 (Azotobacter vinelandii (strain DJ / ATCC BAA-1303)).